The primary structure comprises 626 residues: Leucine aminopeptidase 2-1 (626 aa).

Substrate contacts are provided by residues 134-136 (QCQ) and 259-264 (PYGGME). H288 is a Zn(2+) binding site. E289 functions as the Proton acceptor in the catalytic mechanism. Zn(2+)-binding residues include H292 and E311. The active-site Proton donor is Y389.

It belongs to the peptidase M1 family. The cofactor is Zn(2+).

It localises to the cytoplasm. The protein localises to the nucleus. The enzyme catalyses an epoxide + H2O = an ethanediol. Aminopeptidase that preferentially cleaves di- and tripeptides. Also has low epoxide hydrolase activity (in vitro). Can hydrolyze the epoxide leukotriene LTA(4) but it forms preferentially 5,6-dihydroxy-7,9,11,14-eicosatetraenoic acid rather than the cytokine leukotriene B(4) as the product compared to the homologous mammalian enzyme (in vitro). This is Leucine aminopeptidase 2-1 (LKA4) from Scheffersomyces stipitis (strain ATCC 58785 / CBS 6054 / NBRC 10063 / NRRL Y-11545) (Yeast).